We begin with the raw amino-acid sequence, 1127 residues long: uncharacterized protein (1127 aa).

The first 26 residues, 1–26, serve as a signal peptide directing secretion; sequence MRIHQRSAPCVPVLLFLFLPSAPLCA. A disordered region spans residues 533-600; that stretch reads ETESLSPPAD…ASSSPSEMAV (68 aa). 2 stretches are compositionally biased toward low complexity: residues 536–549 and 583–599; these read SLSP…TPSP and AGAS…SEMA. Residues 1076–1126 adopt a coiled-coil conformation; the sequence is SEDEKEYQRALQELQKGNKLVASAVVEQLLQKDRNKKSAKIQQLKKRIDAQ.

This is an uncharacterized protein from Treponema pallidum (strain Nichols).